The primary structure comprises 732 residues: Catalase-peroxidase (732 aa).

The interval 1-23 is disordered; it reads MSEQSKCPVTGRTAGHPVAGGGM. Residues 97–220 constitute a cross-link (tryptophyl-tyrosyl-methioninium (Trp-Tyr) (with M-246)); sequence WHSAGTYRTS…LAAVQMGLIY (124 aa). His98 acts as the Proton acceptor in catalysis. The segment at residues 220–246 is a cross-link (tryptophyl-tyrosyl-methioninium (Tyr-Met) (with W-97)); that stretch reads YVNPEGPDGNPDPVAAGRDIRETFARM. His261 serves as a coordination point for heme b.

This sequence belongs to the peroxidase family. Peroxidase/catalase subfamily. In terms of assembly, homodimer or homotetramer. Heme b is required as a cofactor. Formation of the three residue Trp-Tyr-Met cross-link is important for the catalase, but not the peroxidase activity of the enzyme.

The enzyme catalyses H2O2 + AH2 = A + 2 H2O. It catalyses the reaction 2 H2O2 = O2 + 2 H2O. Functionally, bifunctional enzyme with both catalase and broad-spectrum peroxidase activity. This is Catalase-peroxidase from Chlorobium limicola (strain DSM 245 / NBRC 103803 / 6330).